The primary structure comprises 135 residues: Type 3 secretion system stator protein (135 aa).

The protein belongs to the SctL stator family. As to quaternary structure, the core secretion machinery of the T3SS is composed of approximately 20 different proteins, including cytoplasmic components, a base, an export apparatus and a needle. This subunit is part of the cytosolic complex.

It localises to the cytoplasm. In terms of biological role, component of the type III secretion system (T3SS), also called injectisome, which is used to inject bacterial effector proteins into eukaryotic host cells. Acts as a regulator of the HrcN/SctN ATPase activity. The sequence is that of Type 3 secretion system stator protein from Rhizobium fredii (Sinorhizobium fredii).